The chain runs to 185 residues: Translation initiation factor IF-3 (185 aa).

The protein belongs to the IF-3 family. As to quaternary structure, monomer.

The protein localises to the cytoplasm. Functionally, IF-3 binds to the 30S ribosomal subunit and shifts the equilibrium between 70S ribosomes and their 50S and 30S subunits in favor of the free subunits, thus enhancing the availability of 30S subunits on which protein synthesis initiation begins. The sequence is that of Translation initiation factor IF-3 from Bacteroides thetaiotaomicron (strain ATCC 29148 / DSM 2079 / JCM 5827 / CCUG 10774 / NCTC 10582 / VPI-5482 / E50).